Reading from the N-terminus, the 585-residue chain is Arginine--tRNA ligase (585 aa).

A 'HIGH' region motif is present at residues 131–141 (ANPTGPMHVGH).

This sequence belongs to the class-I aminoacyl-tRNA synthetase family. Monomer.

The protein localises to the cytoplasm. The catalysed reaction is tRNA(Arg) + L-arginine + ATP = L-arginyl-tRNA(Arg) + AMP + diphosphate. The chain is Arginine--tRNA ligase from Bartonella bacilliformis (strain ATCC 35685 / KC583 / Herrer 020/F12,63).